We begin with the raw amino-acid sequence, 780 residues long: ATP-dependent 6-phosphofructokinase, muscle type (780 aa).

Thr-2 carries the post-translational modification N-acetylthreonine. Residues 2 to 390 (THEEHHATKT…NWEVYKLLAH (389 aa)) form an N-terminal catalytic PFK domain 1 region. ATP is bound by residues Gly-25, 88-89 (RC), and 118-121 (GDGS). Position 119 (Asp-119) interacts with Mg(2+). Phosphoserine is present on Ser-133. Residues 164–166 (SID), Arg-201, 208–210 (MGR), Glu-264, Arg-292, and 298–301 (HVQR) each bind substrate. The active-site Proton acceptor is the Asp-166. Ser-377 bears the Phosphoserine mark. Residues 391–401 (VRPPVSKSGSH) form an interdomain linker region. Residues 402–780 (TVAVMNVGAP…TRKRSGEAAV (379 aa)) form a C-terminal regulatory PFK domain 2 region. Beta-D-fructose 2,6-bisphosphate contacts are provided by residues Arg-471 and 528-532 (TVSNN). Residue Ser-530 is glycosylated (O-linked (GlcNAc) serine). Position 557 is an N6-(2-hydroxyisobutyryl)lysine (Lys-557). Beta-D-fructose 2,6-bisphosphate contacts are provided by residues Arg-566, 573–575 (MGG), Glu-629, Arg-655, and 661–664 (HMQQ). Ser-667 bears the Phosphoserine mark. Arg-735 contacts beta-D-fructose 2,6-bisphosphate. Ser-775 bears the Phosphoserine mark.

This sequence belongs to the phosphofructokinase type A (PFKA) family. ATP-dependent PFK group I subfamily. Eukaryotic two domain clade 'E' sub-subfamily. In terms of assembly, homo- and heterotetramers. Phosphofructokinase (PFK) enzyme functions as a tetramer composed of different combinations of 3 types of subunits, called PFKM (M), PFKL (L) and PFKP (P). The composition of the PFK tetramer differs according to the tissue type it is present in. The kinetic and regulatory properties of the tetrameric enzyme are dependent on the subunit composition, hence can vary across tissues. Interacts (via C-terminus) with HK1 (via N-terminal spermatogenic cell-specific region). It depends on Mg(2+) as a cofactor. GlcNAcylation decreases enzyme activity.

The protein localises to the cytoplasm. The catalysed reaction is beta-D-fructose 6-phosphate + ATP = beta-D-fructose 1,6-bisphosphate + ADP + H(+). The protein operates within carbohydrate degradation; glycolysis; D-glyceraldehyde 3-phosphate and glycerone phosphate from D-glucose: step 3/4. Allosterically activated by ADP, AMP, or fructose 2,6-bisphosphate, and allosterically inhibited by ATP or citrate. Functionally, catalyzes the phosphorylation of D-fructose 6-phosphate to fructose 1,6-bisphosphate by ATP, the first committing step of glycolysis. This Pongo abelii (Sumatran orangutan) protein is ATP-dependent 6-phosphofructokinase, muscle type (PFKM).